Reading from the N-terminus, the 528-residue chain is Protein spinster homolog 1 (528 aa).

The tract at residues 1 to 38 is disordered; sequence MAGSDTAPFLSQADDPDDGPAPGHPGLPGPMGNPKSGE. Ala-2 is modified (N-acetylalanine). 12 consecutive transmembrane segments (helical) span residues 60–80, 98–118, 126–146, 160–180, 187–207, 218–238, 278–298, 323–343, 357–377, 381–401, 421–441, and 465–485; these read LIVVVLCYINLLNYMDRFTVA, GLIQTVFISSYMVLAPVFGYL, YLMCGGIAFWSLVTLGSSFIP, VGVGEASYSTIAPTLIADLFV, MLSIFYFAIPVGSGLGYIAGS, WALRVTPGLGVLAVLLLFLVV, LGFTAVAFVTGSLALWAPAFL, LIFGLITCLTGVLGVGLGVEI, LVCAAGLLGSSPFLFLSLACA, IVATYIFIFIGETLLSMNWAI, FQIVLSHLLGDAGSPYLIGLI, and MLCAFVGALGGAAFLGTAMFI. The residue at position 518 (Ser-518) is a Phosphoserine.

Belongs to the major facilitator superfamily. Spinster (TC 2.A.1.49) family. As to quaternary structure, interacts with BCL2 and BCL2L1.

The protein resides in the lysosome membrane. The enzyme catalyses a 1-acyl-sn-glycero-3-phosphocholine(out) + H(+)(out) = a 1-acyl-sn-glycero-3-phosphocholine(in) + H(+)(in). It catalyses the reaction 1-hexadecanoyl-sn-glycero-3-phosphocholine(out) + H(+)(out) = 1-hexadecanoyl-sn-glycero-3-phosphocholine(in) + H(+)(in). It carries out the reaction 1-(9Z-octadecenoyl)-sn-glycero-3-phosphocholine(out) + H(+)(out) = 1-(9Z-octadecenoyl)-sn-glycero-3-phosphocholine(in) + H(+)(in). The catalysed reaction is 1-(5Z,8Z,11Z,14Z-eicosatetraenoyl)-sn-glycero-3-phosphocholine(out) + H(+)(out) = 1-(5Z,8Z,11Z,14Z-eicosatetraenoyl)-sn-glycero-3-phosphocholine(in) + H(+)(in). The enzyme catalyses 1-(4Z,7Z,10Z,13Z,16Z,19Z-docosahexaenoyl)-sn-glycero-3-phosphocholine(out) + H(+)(out) = 1-(4Z,7Z,10Z,13Z,16Z,19Z-docosahexaenoyl)-sn-glycero-3-phosphocholine(in) + H(+)(in). It catalyses the reaction a 1-acyl-sn-glycero-3-phosphoethanolamine(out) + H(+)(out) = a 1-acyl-sn-glycero-3-phosphoethanolamine(in) + H(+)(in). It carries out the reaction 1-(9Z-octadecenoyl)-sn-glycero-3-phosphoethanolamine(out) + H(+)(out) = 1-(9Z-octadecenoyl)-sn-glycero-3-phosphoethanolamine(in) + H(+)(in). The catalysed reaction is 1-acyl-sn-glycero-3-phospho-(1'-sn-glycerol)(out) + H(+)(out) = 1-acyl-sn-glycero-3-phospho-(1'-sn-glycerol)(in) + H(+)(in). The enzyme catalyses 1-(9Z-octadecenoyl)-sn-glycero-3-phospho-(1'-sn-glycerol)(out) + H(+)(out) = 1-(9Z-octadecenoyl)-sn-glycero-3-phospho-(1'-sn-glycerol)(in) + H(+)(in). It catalyses the reaction a 1-O-(1Z-alkenyl)-sn-glycero-3-phosphocholine(out) + H(+)(out) = a 1-O-(1Z-alkenyl)-sn-glycero-3-phosphocholine(in) + H(+)(in). It carries out the reaction 1-(1Z-hexadecenyl)-sn-glycero-3-phosphocholine(out) + H(+)(out) = 1-(1Z-hexadecenyl)-sn-glycero-3-phosphocholine(in) + H(+)(in). The catalysed reaction is a 1-O-(1Z-alkenyl)-sn-glycero-3-phosphoethanolamine(out) + H(+)(out) = a 1-O-(1Z-alkenyl)-sn-glycero-3-phosphoethanolamine(in) + H(+)(in). The enzyme catalyses 1-O-(1Z-hexadecenyl)-sn-glycero-3-phosphoethanolamine(out) + H(+)(out) = 1-O-(1Z-hexadecenyl)-sn-glycero-3-phosphoethanolamine(in) + H(+)(in). Its function is as follows. Plays a critical role in the phospholipid salvage pathway from lysosomes to the cytosol. Mediates the rate-limiting, proton-dependent, lysosomal efflux of lysophospholipids, which can then be reacylated by acyltransferases in the endoplasmic reticulum to form phospholipids. Selective for zwitterionic headgroups such as lysophosphatidylcholine (LPC) and lysophosphatidylethanolamine (LPE), can also transport lysophosphatidylglycerol (LPG), but not other anionic lysophospholipids, sphingosine, nor sphingomyelin. Transports lysophospholipids with saturated, monounsaturated, and polyunsaturated fatty acids, such as 1-hexadecanoyl-sn-glycero-3-phosphocholine, 1-(9Z-octadecenoyl)-sn-glycero-3-phosphocholine and 1-(4Z,7Z,10Z,13Z,16Z,19Z-docosahexaenoyl)-sn-glycero-3-phosphocholine, respectively. Can also transport lysoplasmalogen (LPC with a fatty alcohol) such as 1-(1Z-hexadecenyl)-sn-glycero-3-phosphocholine. Essential player in lysosomal homeostasis. Crucial for cell survival under conditions of nutrient limitation. May be involved in necrotic or autophagic cell death. The protein is Protein spinster homolog 1 (Spns1) of Rattus norvegicus (Rat).